A 357-amino-acid polypeptide reads, in one-letter code: Arginine kinase Met e 2 (357 aa).

Positions 9 to 91 (KLEAGFKKLE…FDPIIEDYHV (83 aa)) constitute a Phosphagen kinase N-terminal domain. 64–68 (GVGIY) lines the L-arginine pocket. A Phosphagen kinase C-terminal domain is found at 119 to 356 (FVISTRVRCG…LELIKIEKEM (238 aa)). Residues 122–126 (STRVR) and His185 contribute to the ATP site. Position 225 (Glu225) interacts with L-arginine. Residue Arg229 coordinates ATP. Cys271 serves as a coordination point for L-arginine. Residues 280–284 (RASVH) and 309–314 (RGTRGE) contribute to the ATP site. An L-arginine-binding site is contributed by Glu314.

It belongs to the ATP:guanido phosphotransferase family.

It carries out the reaction L-arginine + ATP = N(omega)-phospho-L-arginine + ADP + H(+). Its function is as follows. Catalyzes the reversible transfer of high energy ATP gamma-phosphate group to L-arginine. This chain is Arginine kinase Met e 2, found in Metapenaeus ensis (Greasyback shrimp).